The chain runs to 210 residues: dTTP/UTP pyrophosphatase (210 aa).

Asp-89 functions as the Proton acceptor in the catalytic mechanism.

Belongs to the Maf family. YhdE subfamily. A divalent metal cation is required as a cofactor.

The protein resides in the cytoplasm. The catalysed reaction is dTTP + H2O = dTMP + diphosphate + H(+). It carries out the reaction UTP + H2O = UMP + diphosphate + H(+). In terms of biological role, nucleoside triphosphate pyrophosphatase that hydrolyzes dTTP and UTP. May have a dual role in cell division arrest and in preventing the incorporation of modified nucleotides into cellular nucleic acids. This is dTTP/UTP pyrophosphatase from Burkholderia thailandensis (strain ATCC 700388 / DSM 13276 / CCUG 48851 / CIP 106301 / E264).